The chain runs to 95 residues: Protein E7 (95 aa).

Positions 1-40 (MIGKEATIPDIVLELQQLVQPTDLHCYEELSEEETETEEE) are E7 terminal domain. Residues 24–28 (LHCYE) carry the LXCXE motif; interaction with host RB1 and TMEM173/STING motif. A zinc finger lies at 52-88 (CCFCGSKLRLIVLATHAGIRSQEELLLGEVQLVCPNC). A Nuclear export signal motif is present at residues 70 to 78 (IRSQEELLL).

It belongs to the papillomaviridae E7 protein family. Homodimer. Homooligomer. Interacts with host RB1; this interaction induces dissociation of RB1-E2F1 complex thereby disrupting RB1 activity. Interacts with host EP300; this interaction represses EP300 transcriptional activity. Interacts with protein E2; this interaction inhibits E7 oncogenic activity. Interacts with host TMEM173/STING; this interaction impairs the ability of TMEM173/STING to sense cytosolic DNA and promote the production of type I interferon (IFN-alpha and IFN-beta). Highly phosphorylated.

It is found in the host cytoplasm. Its subcellular location is the host nucleus. Plays a role in viral genome replication by driving entry of quiescent cells into the cell cycle. Stimulation of progression from G1 to S phase allows the virus to efficiently use the cellular DNA replicating machinery to achieve viral genome replication. E7 protein has both transforming and trans-activating activities. Induces the disassembly of the E2F1 transcription factor from RB1, with subsequent transcriptional activation of E2F1-regulated S-phase genes. Interferes with host histone deacetylation mediated by HDAC1 and HDAC2, leading to transcription activation. Also plays a role in the inhibition of both antiviral and antiproliferative functions of host interferon alpha. Interaction with host TMEM173/STING impairs the ability of TMEM173/STING to sense cytosolic DNA and promote the production of type I interferon (IFN-alpha and IFN-beta). The polypeptide is Protein E7 (Human papillomavirus 17).